We begin with the raw amino-acid sequence, 264 residues long: Tryptophan synthase alpha chain (264 aa).

Residues Glu-45 and Asp-56 each act as proton acceptor in the active site.

Belongs to the TrpA family. Tetramer of two alpha and two beta chains.

The enzyme catalyses (1S,2R)-1-C-(indol-3-yl)glycerol 3-phosphate + L-serine = D-glyceraldehyde 3-phosphate + L-tryptophan + H2O. Its pathway is amino-acid biosynthesis; L-tryptophan biosynthesis; L-tryptophan from chorismate: step 5/5. Functionally, the alpha subunit is responsible for the aldol cleavage of indoleglycerol phosphate to indole and glyceraldehyde 3-phosphate. The polypeptide is Tryptophan synthase alpha chain (Leptospira borgpetersenii serovar Hardjo-bovis (strain JB197)).